The following is a 379-amino-acid chain: MLQKPNSAYFHIPFCSHICYYCDFAKVLMTGQPIDAYIESLIEEFQSFEIEKLRTIYIGGGTPSVLSAQQLERLLTAIAEQLDLEVLEEFTVEANPGDLSDEVIKVLADSAVNRISLGVQTFNNALLKKIGRTHTEVQVYDSVERLKKAGFENITIDLIYALPGQTMEMVKSDVEKFLELKLPHVALYSLILEDHTVFMNRQRRGLLRLPSEDKNADMYEYIMDILAKNGYNHYEVSNFGLPGFESKHNITYWDNEEYYGIGAGASGYLAGIRYKNLGPVHHYLKAAPTEKRINEEVLSKKSQIEEEMFLGLRKKSGVLVEKFENKFKCSFEKLYGEQITELINQKLLYNDRQRIHMTDKGFELGNNVFEKFLLDDINF.

The Radical SAM core domain maps to 1–232; that stretch reads MLQKPNSAYF…MDILAKNGYN (232 aa). Tyr-9 is a binding site for S-adenosyl-L-methionine. The [4Fe-4S] cluster site is built by Cys-15, Cys-19, and Cys-22. S-adenosyl-L-methionine-binding positions include Gly-60, 61-62, Glu-93, Gln-120, Arg-132, and Asp-157; that span reads GT.

This sequence belongs to the anaerobic coproporphyrinogen-III oxidase family. HemW subfamily. Homodimer.

The protein resides in the cytoplasm. Its subcellular location is the cell membrane. Functionally, could serve in the delivery of heme to a membrane-localized target protein. Binds one molecule of heme per monomer, possibly covalently; heme and Fe-S cluster binding are independent. Incubation with the reductant sodium dithionite increases binding. Does not have coproporphyrinogen III dehydrogenase activity in vitro, does not complement an E.coli hemN deletion in vivo. Binds 1 Fe-S cluster, it is probably [4Fe-4S]. The cluster is coordinated with 3 cysteines and an exchangeable S-adenosyl-L-methionine; only dimeric protein has the cluster. This is Heme chaperone HemW from Lactococcus lactis subsp. lactis (strain IL1403) (Streptococcus lactis).